A 229-amino-acid chain; its full sequence is MPKKKALTPLPYLASIVFLPWWISISFNKSLEPWVTNWWNTRQSETFLNDIQEKNVLERFIELEQLFLLDEMIKEYPGTQIQKLRIGIHKETIQLVKMHNEDHIHIILHFSTNIICFAILSGYSILGNEELVILNSWVQEFLYNLSDTIKAFSILLLTDLCIGFHSPHGWELMIGSVYKDFGFAHNDQIISGLVSTFPVILDTILKYWIFHYLNRVSPSLVVVYHSMNE.

3 helical membrane-spanning segments follow: residues 7 to 27 (LTPLPYLASIVFLPWWISISF), 106 to 126 (IILHFSTNIICFAILSGYSIL), and 189 to 209 (IISGLVSTFPVILDTILKYWI).

This sequence belongs to the CemA family.

It is found in the plastid. The protein localises to the chloroplast inner membrane. It carries out the reaction K(+)(in) + H(+)(out) = K(+)(out) + H(+)(in). Its function is as follows. Contributes to K(+)/H(+) antiport activity by supporting proton efflux to control proton extrusion and homeostasis in chloroplasts in a light-dependent manner to modulate photosynthesis. Prevents excessive induction of non-photochemical quenching (NPQ) under continuous-light conditions. Indirectly promotes efficient inorganic carbon uptake into chloroplasts. In Liriodendron tulipifera (Tuliptree), this protein is Potassium/proton antiporter CemA.